The primary structure comprises 212 residues: Cytidylate kinase (212 aa).

7 to 15 provides a ligand contact to ATP; it reads GPAASGKGT.

Belongs to the cytidylate kinase family. Type 1 subfamily.

The protein resides in the cytoplasm. It carries out the reaction CMP + ATP = CDP + ADP. The catalysed reaction is dCMP + ATP = dCDP + ADP. The protein is Cytidylate kinase of Rhodopseudomonas palustris (strain BisB5).